A 752-amino-acid chain; its full sequence is Granule-bound starch synthase 2, chloroplastic/amyloplastic (752 aa).

A chloroplast-targeting transit peptide spans 1 to 57 (MMLSLGSDATVLPFHAKNLKFTPKLSTLNGDLAFSKGLGVGRLNCGSVRLNHKQHVR). 2 disordered regions span residues 116–146 (LEGN…SGSA) and 224–253 (FENF…EKPP). Lys-275 contacts ADP-alpha-D-glucose.

The protein belongs to the glycosyltransferase 1 family. Bacterial/plant glycogen synthase subfamily. Widely expressed.

It localises to the plastid. Its subcellular location is the chloroplast. The protein resides in the amyloplast. It carries out the reaction [(1-&gt;4)-alpha-D-glucosyl](n) + ADP-alpha-D-glucose = [(1-&gt;4)-alpha-D-glucosyl](n+1) + ADP + H(+). It participates in glycan biosynthesis; starch biosynthesis. This chain is Granule-bound starch synthase 2, chloroplastic/amyloplastic, found in Pisum sativum (Garden pea).